The following is a 386-amino-acid chain: GTPase Obg (386 aa).

Residues 1–159 enclose the Obg domain; that stretch reads MKFVDEAVIR…RSLKLELMLL (159 aa). The region spanning 160–333 is the OBG-type G domain; the sequence is ADVGLLGMPN…LSLKLVDFID (174 aa). Residues 166–173, 191–195, 213–216, 283–286, and 314–316 contribute to the GTP site; these read GMPNAGKS, FTTLV, DIPG, NKKD, and SAY. 2 residues coordinate Mg(2+): Ser173 and Thr193. The interval 356 to 375 is disordered; sequence KDSDSLNEDFDDSDDDDFDD. Positions 360-375 are enriched in acidic residues; it reads SLNEDFDDSDDDDFDD.

Belongs to the TRAFAC class OBG-HflX-like GTPase superfamily. OBG GTPase family. As to quaternary structure, monomer. Mg(2+) serves as cofactor.

It is found in the cytoplasm. Its function is as follows. An essential GTPase which binds GTP, GDP and possibly (p)ppGpp with moderate affinity, with high nucleotide exchange rates and a fairly low GTP hydrolysis rate. Plays a role in control of the cell cycle, stress response, ribosome biogenesis and in those bacteria that undergo differentiation, in morphogenesis control. The sequence is that of GTPase Obg from Shewanella sediminis (strain HAW-EB3).